A 128-amino-acid chain; its full sequence is UPF0102 protein GSU0650 (128 aa).

This sequence belongs to the UPF0102 family.

In Geobacter sulfurreducens (strain ATCC 51573 / DSM 12127 / PCA), this protein is UPF0102 protein GSU0650.